The following is a 317-amino-acid chain: MTVKLICTSHTPLMGFGSPPEATEKHVRQVFQQLAEQIKDYDPQLIVIFAPDHFNGFFYDLMPAFCVGVRANAVGDWDIGKGPLNVPENTAKDLISALYDSGIDVAHSWRMQVDHGFTQPLMLLCQNLQRYPTIPIFINCAAKPLPTCRRAVELGRAVGQFLFTTDQRVLLLGSGGLSHDPPIPQMGQVPPEVEEGLIAGRNPTKEARQKRQIRVIEVGKSLARGENIVAPLNPQWDDELLRIFCSGDIRRLASLTEGGIAIQGGKGGQEIRCWIAAFAALSVYGEYKAQRHYYQPIKEWLAGMAMVSAQPVTQIGA.

His115 (proton donor) is an active-site residue. The active-site Proton acceptor is His179.

The protein belongs to the LigB/MhpB extradiol dioxygenase family. In terms of assembly, homotetramer. Fe(2+) is required as a cofactor.

It catalyses the reaction 3-(2,3-dihydroxyphenyl)propanoate + O2 = (2Z,4E)-2-hydroxy-6-oxonona-2,4-dienedioate + H(+). The enzyme catalyses (2E)-3-(2,3-dihydroxyphenyl)prop-2-enoate + O2 = (2Z,4E,7E)-2-hydroxy-6-oxonona-2,4,7-trienedioate + H(+). It participates in aromatic compound metabolism; 3-phenylpropanoate degradation. Its function is as follows. Catalyzes the non-heme iron(II)-dependent oxidative cleavage of 2,3-dihydroxyphenylpropionic acid and 2,3-dihydroxicinnamic acid into 2-hydroxy-6-ketononadienedioate and 2-hydroxy-6-ketononatrienedioate, respectively. In Photorhabdus laumondii subsp. laumondii (strain DSM 15139 / CIP 105565 / TT01) (Photorhabdus luminescens subsp. laumondii), this protein is 2,3-dihydroxyphenylpropionate/2,3-dihydroxicinnamic acid 1,2-dioxygenase.